A 221-amino-acid polypeptide reads, in one-letter code: MSSSETQKMQLYSFSLSSCAWRVRIALHLKGLDFEYKAVDLFKGEHLTPEFLKLNPLGYVPVLVHGDIVIADSLAIIMYLEEKFPENPLLPQDLQKRALNYQAANIVTSNIQPLQNLAVLNYIEEKLGSDEKLSWAKHHIKKGFSALEKLLKGHAGKYATGDEVGLADLFLAPQIIASITGFGMDMAEFPLLKSLNDAYLKYQHFRMRCQRISPMLDEAKS.

The region spanning 7–88 (QKMQLYSFSL…YLEEKFPENP (82 aa)) is the GST N-terminal domain. Residues 17–22 (SSCAWR), Val-60, 72–73 (DS), Gln-112, and 116–118 (NLA) each bind glutathione. One can recognise a GST C-terminal domain in the interval 93–221 (DLQKRALNYQ…ISPMLDEAKS (129 aa)).

The protein belongs to the GST superfamily. Zeta family.

The catalysed reaction is RX + glutathione = an S-substituted glutathione + a halide anion + H(+). Functionally, conjugation of reduced glutathione to a wide number of exogenous and endogenous hydrophobic electrophiles. This Dianthus caryophyllus (Carnation) protein is Glutathione S-transferase 1 (GST1).